Here is a 209-residue protein sequence, read N- to C-terminus: FMN-dependent NADH:quinone oxidoreductase (209 aa).

Residues Ser-9 and 15-17 (SNS) contribute to the FMN site.

It belongs to the azoreductase type 1 family. In terms of assembly, homodimer. It depends on FMN as a cofactor.

It carries out the reaction 2 a quinone + NADH + H(+) = 2 a 1,4-benzosemiquinone + NAD(+). The enzyme catalyses N,N-dimethyl-1,4-phenylenediamine + anthranilate + 2 NAD(+) = 2-(4-dimethylaminophenyl)diazenylbenzoate + 2 NADH + 2 H(+). Quinone reductase that provides resistance to thiol-specific stress caused by electrophilic quinones. In terms of biological role, also exhibits azoreductase activity. Catalyzes the reductive cleavage of the azo bond in aromatic azo compounds to the corresponding amines. This Bordetella parapertussis (strain 12822 / ATCC BAA-587 / NCTC 13253) protein is FMN-dependent NADH:quinone oxidoreductase.